Here is a 241-residue protein sequence, read N- to C-terminus: Leucyl/phenylalanyl-tRNA--protein transferase (241 aa).

The protein belongs to the L/F-transferase family.

It localises to the cytoplasm. It catalyses the reaction N-terminal L-lysyl-[protein] + L-leucyl-tRNA(Leu) = N-terminal L-leucyl-L-lysyl-[protein] + tRNA(Leu) + H(+). It carries out the reaction N-terminal L-arginyl-[protein] + L-leucyl-tRNA(Leu) = N-terminal L-leucyl-L-arginyl-[protein] + tRNA(Leu) + H(+). The enzyme catalyses L-phenylalanyl-tRNA(Phe) + an N-terminal L-alpha-aminoacyl-[protein] = an N-terminal L-phenylalanyl-L-alpha-aminoacyl-[protein] + tRNA(Phe). Functions in the N-end rule pathway of protein degradation where it conjugates Leu, Phe and, less efficiently, Met from aminoacyl-tRNAs to the N-termini of proteins containing an N-terminal arginine or lysine. The polypeptide is Leucyl/phenylalanyl-tRNA--protein transferase (Neisseria meningitidis serogroup A / serotype 4A (strain DSM 15465 / Z2491)).